The primary structure comprises 239 residues: Purine nucleoside phosphorylase DeoD-type (239 aa).

His-5 is an a purine D-ribonucleoside binding site. Residues Gly-21, Arg-25, Arg-44, and 88–91 (RIGS) contribute to the phosphate site. A purine D-ribonucleoside is bound by residues 180 to 182 (EME) and 204 to 205 (TD). Residue Asp-205 is the Proton donor of the active site.

Belongs to the PNP/UDP phosphorylase family. In terms of assembly, homohexamer; trimer of homodimers.

It carries out the reaction a purine D-ribonucleoside + phosphate = a purine nucleobase + alpha-D-ribose 1-phosphate. It catalyses the reaction a purine 2'-deoxy-D-ribonucleoside + phosphate = a purine nucleobase + 2-deoxy-alpha-D-ribose 1-phosphate. In terms of biological role, catalyzes the reversible phosphorolytic breakdown of the N-glycosidic bond in the beta-(deoxy)ribonucleoside molecules, with the formation of the corresponding free purine bases and pentose-1-phosphate. This chain is Purine nucleoside phosphorylase DeoD-type, found in Aliivibrio fischeri (strain ATCC 700601 / ES114) (Vibrio fischeri).